We begin with the raw amino-acid sequence, 272 residues long: Formamidopyrimidine-DNA glycosylase (272 aa).

Catalysis depends on Pro-2, which acts as the Schiff-base intermediate with DNA. The active-site Proton donor is Glu-3. The active-site Proton donor; for beta-elimination activity is the Lys-57. Residues His-90, Arg-109, and Lys-150 each contribute to the DNA site. The FPG-type zinc finger occupies 235–269; that stretch reads HVYGRAKKKCLLCSSIIQEEKIGQRNTFWCGHCQP. Catalysis depends on Arg-259, which acts as the Proton donor; for delta-elimination activity.

It belongs to the FPG family. As to quaternary structure, monomer. Zn(2+) serves as cofactor.

The enzyme catalyses Hydrolysis of DNA containing ring-opened 7-methylguanine residues, releasing 2,6-diamino-4-hydroxy-5-(N-methyl)formamidopyrimidine.. It catalyses the reaction 2'-deoxyribonucleotide-(2'-deoxyribose 5'-phosphate)-2'-deoxyribonucleotide-DNA = a 3'-end 2'-deoxyribonucleotide-(2,3-dehydro-2,3-deoxyribose 5'-phosphate)-DNA + a 5'-end 5'-phospho-2'-deoxyribonucleoside-DNA + H(+). Functionally, involved in base excision repair of DNA damaged by oxidation or by mutagenic agents. Acts as a DNA glycosylase that recognizes and removes damaged bases. Has a preference for oxidized purines, such as 7,8-dihydro-8-oxoguanine (8-oxoG). Has AP (apurinic/apyrimidinic) lyase activity and introduces nicks in the DNA strand. Cleaves the DNA backbone by beta-delta elimination to generate a single-strand break at the site of the removed base with both 3'- and 5'-phosphates. The sequence is that of Formamidopyrimidine-DNA glycosylase from Aliivibrio fischeri (strain ATCC 700601 / ES114) (Vibrio fischeri).